The sequence spans 476 residues: Chromosomal replication initiator protein DnaA (476 aa).

The segment at 1 to 87 is domain I, interacts with DnaA modulators; the sequence is MSESSHVGLW…LMYNVLVDKS (87 aa). Residues 87-130 are domain II; it reads SSGATVNQESTTRSTAIPQSGLPRVDERKAPGLLRAPAVQDLDP. The segment at 131–348 is domain III, AAA+ region; sequence HLNPNYNFET…GIVISIMAHS (218 aa). ATP is bound by residues G176, G178, K179, and T180. A domain IV, binds dsDNA region spans residues 349–476; it reads TIYNKEIDLD…KKRNVSNGER (128 aa).

This sequence belongs to the DnaA family. In terms of assembly, oligomerizes as a right-handed, spiral filament on DNA at oriC.

It localises to the cytoplasm. In terms of biological role, plays an essential role in the initiation and regulation of chromosomal replication. ATP-DnaA binds to the origin of replication (oriC) to initiate formation of the DNA replication initiation complex once per cell cycle. Binds the DnaA box (a 9 base pair repeat at the origin) and separates the double-stranded (ds)DNA. Forms a right-handed helical filament on oriC DNA; dsDNA binds to the exterior of the filament while single-stranded (ss)DNA is stabiized in the filament's interior. The ATP-DnaA-oriC complex binds and stabilizes one strand of the AT-rich DNA unwinding element (DUE), permitting loading of DNA polymerase. After initiation quickly degrades to an ADP-DnaA complex that is not apt for DNA replication. Binds acidic phospholipids. The protein is Chromosomal replication initiator protein DnaA of Bacteroides fragilis (strain YCH46).